A 388-amino-acid polypeptide reads, in one-letter code: 1-deoxy-D-xylulose 5-phosphate reductoisomerase (388 aa).

Residues Thr15, Gly16, Ser17, Ile18, and Asn127 each contribute to the NADPH site. Lys128 contributes to the 1-deoxy-D-xylulose 5-phosphate binding site. Glu129 is an NADPH binding site. Asp153 is a binding site for Mn(2+). 4 residues coordinate 1-deoxy-D-xylulose 5-phosphate: Ser154, Glu155, Ser179, and His202. Glu155 provides a ligand contact to Mn(2+). Residue Gly208 coordinates NADPH. 4 residues coordinate 1-deoxy-D-xylulose 5-phosphate: Ser215, Asn220, Lys221, and Glu224. Glu224 contacts Mn(2+).

It belongs to the DXR family. Requires Mg(2+) as cofactor. Mn(2+) serves as cofactor.

The catalysed reaction is 2-C-methyl-D-erythritol 4-phosphate + NADP(+) = 1-deoxy-D-xylulose 5-phosphate + NADPH + H(+). It participates in isoprenoid biosynthesis; isopentenyl diphosphate biosynthesis via DXP pathway; isopentenyl diphosphate from 1-deoxy-D-xylulose 5-phosphate: step 1/6. Its function is as follows. Catalyzes the NADPH-dependent rearrangement and reduction of 1-deoxy-D-xylulose-5-phosphate (DXP) to 2-C-methyl-D-erythritol 4-phosphate (MEP). The polypeptide is 1-deoxy-D-xylulose 5-phosphate reductoisomerase (Bacteroides fragilis (strain ATCC 25285 / DSM 2151 / CCUG 4856 / JCM 11019 / LMG 10263 / NCTC 9343 / Onslow / VPI 2553 / EN-2)).